The chain runs to 67 residues: Large ribosomal subunit protein bL32 (67 aa).

Residues 1–19 are compositionally biased toward basic residues; the sequence is MAVPKRKMSRSNTRARRSQ. A disordered region spans residues 1-21; sequence MAVPKRKMSRSNTRARRSQWK.

This sequence belongs to the bacterial ribosomal protein bL32 family.

This is Large ribosomal subunit protein bL32 from Clavibacter michiganensis subsp. michiganensis (strain NCPPB 382).